A 284-amino-acid polypeptide reads, in one-letter code: Shikimate dehydrogenase (NADP(+)) (284 aa).

Shikimate contacts are provided by residues 20 to 22 (SIS) and Ser-67. Lys-71 acts as the Proton acceptor in catalysis. Residue Asp-83 coordinates NADP(+). Shikimate-binding residues include Asn-92 and Asp-107. NADP(+)-binding positions include 129–133 (GAGGA) and Ile-227. Residue Tyr-229 participates in shikimate binding. Position 250 (Gly-250) interacts with NADP(+).

It belongs to the shikimate dehydrogenase family. As to quaternary structure, homodimer.

The catalysed reaction is shikimate + NADP(+) = 3-dehydroshikimate + NADPH + H(+). The protein operates within metabolic intermediate biosynthesis; chorismate biosynthesis; chorismate from D-erythrose 4-phosphate and phosphoenolpyruvate: step 4/7. Functionally, involved in the biosynthesis of the chorismate, which leads to the biosynthesis of aromatic amino acids. Catalyzes the reversible NADPH linked reduction of 3-dehydroshikimate (DHSA) to yield shikimate (SA). The protein is Shikimate dehydrogenase (NADP(+)) of Streptococcus pneumoniae (strain JJA).